The chain runs to 199 residues: Thymidine kinase (199 aa).

Residues 15 to 22 (GSMFSGKS) and 88 to 91 (DEIQ) contribute to the ATP site. The Proton acceptor role is filled by glutamate 89. Zn(2+) contacts are provided by cysteine 145, cysteine 148, cysteine 183, and histidine 186.

The protein belongs to the thymidine kinase family. As to quaternary structure, homotetramer.

It is found in the cytoplasm. The catalysed reaction is thymidine + ATP = dTMP + ADP + H(+). In Staphylococcus haemolyticus (strain JCSC1435), this protein is Thymidine kinase.